Here is a 189-residue protein sequence, read N- to C-terminus: GTP cyclohydrolase 1 (189 aa).

Residues C78, H81, and C150 each contribute to the Zn(2+) site.

This sequence belongs to the GTP cyclohydrolase I family. As to quaternary structure, homomer.

The enzyme catalyses GTP + H2O = 7,8-dihydroneopterin 3'-triphosphate + formate + H(+). The protein operates within cofactor biosynthesis; 7,8-dihydroneopterin triphosphate biosynthesis; 7,8-dihydroneopterin triphosphate from GTP: step 1/1. The chain is GTP cyclohydrolase 1 from Listeria monocytogenes serotype 4b (strain CLIP80459).